A 286-amino-acid chain; its full sequence is Zinc finger protein ZAT5 (286 aa).

Disordered stretches follow at residues 1–28, 40–60, and 131–171; these read MMMG…RSSS, STSS…EYNS, and GGHR…FKVS. A C2H2-type 1 zinc finger spans residues 115–137; that stretch reads YECKTCNRTFSSFQALGGHRASH. Residues 154–171 show a composition bias toward polar residues; sequence QPKSSASEEGQNSHFKVS. The C2H2-type 2 zinc finger occupies 190–212; that stretch reads HECSICGSEFTSGQALGGHMRRH.

As to expression, expressed in flowers and siliques.

The protein localises to the nucleus. In terms of biological role, probable transcription factor that may be involved in stress responses. This chain is Zinc finger protein ZAT5 (ZAT5), found in Arabidopsis thaliana (Mouse-ear cress).